The following is a 420-amino-acid chain: Gamma-glutamyl phosphate reductase (420 aa).

This sequence belongs to the gamma-glutamyl phosphate reductase family.

It is found in the cytoplasm. The enzyme catalyses L-glutamate 5-semialdehyde + phosphate + NADP(+) = L-glutamyl 5-phosphate + NADPH + H(+). Its pathway is amino-acid biosynthesis; L-proline biosynthesis; L-glutamate 5-semialdehyde from L-glutamate: step 2/2. In terms of biological role, catalyzes the NADPH-dependent reduction of L-glutamate 5-phosphate into L-glutamate 5-semialdehyde and phosphate. The product spontaneously undergoes cyclization to form 1-pyrroline-5-carboxylate. This chain is Gamma-glutamyl phosphate reductase, found in Streptococcus pneumoniae (strain Hungary19A-6).